Reading from the N-terminus, the 121-residue chain is Large ribosomal subunit protein bL12 (121 aa).

This sequence belongs to the bacterial ribosomal protein bL12 family. In terms of assembly, homodimer. Part of the ribosomal stalk of the 50S ribosomal subunit. Forms a multimeric L10(L12)X complex, where L10 forms an elongated spine to which 2 to 4 L12 dimers bind in a sequential fashion. Binds GTP-bound translation factors.

Functionally, forms part of the ribosomal stalk which helps the ribosome interact with GTP-bound translation factors. Is thus essential for accurate translation. This Lactococcus lactis subsp. lactis (strain IL1403) (Streptococcus lactis) protein is Large ribosomal subunit protein bL12.